A 1045-amino-acid chain; its full sequence is Probable beta-glucosidase E (1045 aa).

The disordered stretch occupies residues 1–74 (MAPPDSTHGG…SGSYQLRPVD (74 aa)). The Cytoplasmic segment spans residues 1–163 (MAPPDSTHGG…PVKYARIWWR (163 aa)). Residues 11–20 (SFRDHLKTND) show a composition bias toward basic and acidic residues. The chain crosses the membrane as a helical; Signal-anchor for type II membrane protein span at residues 164–184 (TLLAVIVTLAVVVWGFLSFAV). Residues 185 to 1045 (SHREEPKVWP…SRDLPLMGEY (861 aa)) are Extracellular-facing. N-linked (GlcNAc...) asparagine glycosylation is found at N226, N234, and N402. D430 is an active-site residue. N-linked (GlcNAc...) asparagine glycosylation is found at N473, N512, N577, N893, N902, and N988.

The protein belongs to the glycosyl hydrolase 3 family.

It is found in the cell membrane. The enzyme catalyses Hydrolysis of terminal, non-reducing beta-D-glucosyl residues with release of beta-D-glucose.. It functions in the pathway glycan metabolism; cellulose degradation. In terms of biological role, beta-glucosidases are one of a number of cellulolytic enzymes involved in the degradation of cellulosic biomass. Catalyzes the last step releasing glucose from the inhibitory cellobiose. This is Probable beta-glucosidase E (bglE) from Neosartorya fischeri (strain ATCC 1020 / DSM 3700 / CBS 544.65 / FGSC A1164 / JCM 1740 / NRRL 181 / WB 181) (Aspergillus fischerianus).